A 184-amino-acid polypeptide reads, in one-letter code: GTP cyclohydrolase 1 (184 aa).

Zn(2+) is bound by residues Cys-75, His-78, and Cys-146.

This sequence belongs to the GTP cyclohydrolase I family. Toroid-shaped homodecamer, composed of two pentamers of five dimers.

The catalysed reaction is GTP + H2O = 7,8-dihydroneopterin 3'-triphosphate + formate + H(+). Its pathway is cofactor biosynthesis; 7,8-dihydroneopterin triphosphate biosynthesis; 7,8-dihydroneopterin triphosphate from GTP: step 1/1. In Chromohalobacter salexigens (strain ATCC BAA-138 / DSM 3043 / CIP 106854 / NCIMB 13768 / 1H11), this protein is GTP cyclohydrolase 1.